The sequence spans 345 residues: Protein RecA (345 aa).

65–72 (GPESSGKT) provides a ligand contact to ATP.

This sequence belongs to the RecA family.

The protein resides in the cytoplasm. In terms of biological role, can catalyze the hydrolysis of ATP in the presence of single-stranded DNA, the ATP-dependent uptake of single-stranded DNA by duplex DNA, and the ATP-dependent hybridization of homologous single-stranded DNAs. It interacts with LexA causing its activation and leading to its autocatalytic cleavage. This chain is Protein RecA, found in Stenotrophomonas maltophilia (strain R551-3).